The following is a 766-amino-acid chain: Isocitrate lyase 2 (766 aa).

106–108 (GGW) provides a ligand contact to substrate. Mg(2+) is bound at residue Asp177. The active-site Proton acceptor is Cys215. Residues 216–217 (GH), Arg252, 487–491 (NLSPS), and Thr522 contribute to the substrate site.

The protein belongs to the isocitrate lyase/PEP mutase superfamily. Isocitrate lyase family. It depends on Mg(2+) as a cofactor.

It carries out the reaction D-threo-isocitrate = glyoxylate + succinate. Its pathway is carbohydrate metabolism; glyoxylate cycle; (S)-malate from isocitrate: step 1/2. In terms of biological role, involved in the persistence and virulence of Mycobacterium. Catalyzes the reversible formation of succinate and glyoxylate from isocitrate, a key step of the glyoxylate cycle, which operates as an anaplerotic route for replenishing the tricarboxylic acid cycle during growth on fatty acid substrates. The sequence is that of Isocitrate lyase 2 (aceA) from Mycobacterium bovis (strain ATCC BAA-935 / AF2122/97).